The primary structure comprises 67 residues: DNA-directed RNA polymerase subunit omega (67 aa).

Belongs to the RNA polymerase subunit omega family. In terms of assembly, the RNAP catalytic core consists of 2 alpha, 1 beta, 1 beta' and 1 omega subunit. When a sigma factor is associated with the core the holoenzyme is formed, which can initiate transcription.

It carries out the reaction RNA(n) + a ribonucleoside 5'-triphosphate = RNA(n+1) + diphosphate. Functionally, promotes RNA polymerase assembly. Latches the N- and C-terminal regions of the beta' subunit thereby facilitating its interaction with the beta and alpha subunits. The protein is DNA-directed RNA polymerase subunit omega of Methylibium petroleiphilum (strain ATCC BAA-1232 / LMG 22953 / PM1).